Reading from the N-terminus, the 229-residue chain is Heptaprenylglyceryl phosphate synthase (229 aa).

K12 serves as a coordination point for sn-glycerol 1-phosphate. Mg(2+) is bound by residues D14 and T40. Sn-glycerol 1-phosphate is bound by residues 159-164, G189, and 209-210; these read YIEYSG and GN.

Belongs to the GGGP/HepGP synthase family. Group I subfamily. In terms of assembly, homodimer. The cofactor is Mg(2+).

It carries out the reaction sn-glycerol 1-phosphate + all-trans-heptaprenyl diphosphate = 3-heptaprenyl-sn-glycero-1-phosphate + diphosphate. It functions in the pathway membrane lipid metabolism; glycerophospholipid metabolism. Its function is as follows. Prenyltransferase that catalyzes in vivo the transfer of the heptaprenyl moiety of heptaprenyl pyrophosphate (HepPP; 35 carbon atoms) to the C3 hydroxyl of sn-glycerol-1-phosphate (G1P), producing heptaprenylglyceryl phosphate (HepGP). This reaction is an ether-bond-formation step in the biosynthesis of archaea-type G1P-based membrane lipids found in Bacillales. This chain is Heptaprenylglyceryl phosphate synthase, found in Staphylococcus saprophyticus subsp. saprophyticus (strain ATCC 15305 / DSM 20229 / NCIMB 8711 / NCTC 7292 / S-41).